A 395-amino-acid polypeptide reads, in one-letter code: Na(+)/H(+) antiporter NhaA (395 aa).

11 helical membrane passes run 11–31 (FAMEAASGLLLIAAAILALII), 61–81 (LLLWINDGLMALFFLLIGLEV), 96–116 (IVLPGAAAIGGMLVPALIYWF), 127–147 (GWAIPTATDIAFALGVLALLG), 156–176 (LFLMTLAIIDDLGAIVIIAIF), 179–199 (GTLSTLSLMLAGACIAALVAM), 202–222 (MGVVKLGPYMIIGLILWVCVL), 264–284 (FGILPLFAFANAGLSLSGVTL), 295–315 (IAVGLLLGKTIGVFGLTWMAV), 331–351 (VLGVAILCGIGFTMSLFVGSL), and 366–386 (MGILTGSLFAALIGYAVTAAA).

It belongs to the NhaA Na(+)/H(+) (TC 2.A.33) antiporter family.

The protein resides in the cell inner membrane. The catalysed reaction is Na(+)(in) + 2 H(+)(out) = Na(+)(out) + 2 H(+)(in). Na(+)/H(+) antiporter that extrudes sodium in exchange for external protons. This is Na(+)/H(+) antiporter NhaA from Pseudomonas fluorescens (strain ATCC BAA-477 / NRRL B-23932 / Pf-5).